A 111-amino-acid chain; its full sequence is Large ribosomal subunit protein uL24 (111 aa).

The segment at 43–62 is disordered; it reads TRHKKKDQTTKRAAKQSTGK.

It belongs to the universal ribosomal protein uL24 family. As to quaternary structure, part of the 50S ribosomal subunit.

Functionally, one of two assembly initiator proteins, it binds directly to the 5'-end of the 23S rRNA, where it nucleates assembly of the 50S subunit. In terms of biological role, one of the proteins that surrounds the polypeptide exit tunnel on the outside of the subunit. This Mycoplasma pneumoniae (strain ATCC 29342 / M129 / Subtype 1) (Mycoplasmoides pneumoniae) protein is Large ribosomal subunit protein uL24.